The sequence spans 362 residues: Phosphoserine aminotransferase (362 aa).

Arg43 provides a ligand contact to L-glutamate. Pyridoxal 5'-phosphate is bound by residues 77–78 (AR), Trp103, Thr153, Asp173, and Gln196. Lys197 carries the N6-(pyridoxal phosphate)lysine modification.

The protein belongs to the class-V pyridoxal-phosphate-dependent aminotransferase family. SerC subfamily. Homodimer. Requires pyridoxal 5'-phosphate as cofactor.

The protein localises to the cytoplasm. It catalyses the reaction O-phospho-L-serine + 2-oxoglutarate = 3-phosphooxypyruvate + L-glutamate. The enzyme catalyses 4-(phosphooxy)-L-threonine + 2-oxoglutarate = (R)-3-hydroxy-2-oxo-4-phosphooxybutanoate + L-glutamate. Its pathway is amino-acid biosynthesis; L-serine biosynthesis; L-serine from 3-phospho-D-glycerate: step 2/3. It participates in cofactor biosynthesis; pyridoxine 5'-phosphate biosynthesis; pyridoxine 5'-phosphate from D-erythrose 4-phosphate: step 3/5. Its function is as follows. Catalyzes the reversible conversion of 3-phosphohydroxypyruvate to phosphoserine and of 3-hydroxy-2-oxo-4-phosphonooxybutanoate to phosphohydroxythreonine. This Legionella pneumophila (strain Lens) protein is Phosphoserine aminotransferase.